A 28-amino-acid polypeptide reads, in one-letter code: NU-theraphotoxin-Preg1a (28 aa).

3 cysteine pairs are disulfide-bonded: Cys2–Cys19, Cys9–Cys22, and Cys18–Cys27.

As to expression, expressed by the venom gland.

It is found in the secreted. Functionally, toxin that acts as an agonist on melanocortin receptors (MC1R, MC3R, MC5R, MC5R). After binding to MC1R, the peptide activates the hMC1R/Gs pathway, but after binding to MC4R, it is not able to activate or antagonize the MC4R/Gs pathway. Inhibits melanocyte stimulating hormone (MSH)-binding to human receptors (Ki=1.8 uM to MC1R, Ki=19.8 uM to MC3R, Ki=7.1 uM to MC4R, Ki=10.0 uM to MC5R). This toxin is structurally unrelated to the natural agonists. This Poecilotheria regalis (Indian ornamental tree spider) protein is NU-theraphotoxin-Preg1a.